A 356-amino-acid chain; its full sequence is Ferrochelatase (356 aa).

Fe cation contacts are provided by His-214 and Glu-295.

It belongs to the ferrochelatase family.

The protein resides in the cytoplasm. The catalysed reaction is heme b + 2 H(+) = protoporphyrin IX + Fe(2+). Its pathway is porphyrin-containing compound metabolism; protoheme biosynthesis; protoheme from protoporphyrin-IX: step 1/1. Catalyzes the ferrous insertion into protoporphyrin IX. The protein is Ferrochelatase of Paraburkholderia xenovorans (strain LB400).